We begin with the raw amino-acid sequence, 230 residues long: Ribonuclease 3 (230 aa).

The region spanning 10–133 (DPRLLSRIGY…IIGAIYLDSS (124 aa)) is the RNase III domain. Glutamate 46 lines the Mg(2+) pocket. Residue aspartate 50 is part of the active site. Residues aspartate 119 and glutamate 122 each coordinate Mg(2+). Residue glutamate 122 is part of the active site. The DRBM domain maps to 161-230 (DPKSRLQEYL…AAEILKLLEQ (70 aa)).

This sequence belongs to the ribonuclease III family. Homodimer. It depends on Mg(2+) as a cofactor.

Its subcellular location is the cytoplasm. It carries out the reaction Endonucleolytic cleavage to 5'-phosphomonoester.. In terms of biological role, digests double-stranded RNA. Involved in the processing of primary rRNA transcript to yield the immediate precursors to the large and small rRNAs (23S and 16S). Processes some mRNAs, and tRNAs when they are encoded in the rRNA operon. Processes pre-crRNA and tracrRNA of type II CRISPR loci if present in the organism. The polypeptide is Ribonuclease 3 (Acinetobacter baumannii (strain SDF)).